Consider the following 185-residue polypeptide: Capsid protein (185 aa).

Positions 136-185 (NAPILSTLPETTVVRRRDRGRSPRRRTPSPRRRRSPSPRRRRSQSRESQC) are disordered. Positions 149 to 178 (VRRRDRGRSPRRRTPSPRRRRSPSPRRRRS) are enriched in basic residues. A phosphoserine; by host mark is found at Ser-157, Ser-164, and Ser-172. One copy of the 1; half-length repeat lies at 157–163 (SPRRRTP). Residues 157–179 (SPRRRTPSPRRRRSPSPRRRRSQ) are 3 X 8 AA repeats of S-P-R-R-R-[PR]-S-Q. Residues 160–177 (RRTPSPRRRRSPSPRRRR) carry the Bipartite nuclear localization signal motif. 2 consecutive repeat copies span residues 164 to 171 (SPRRRRSP) and 172 to 179 (SPRRRRSQ). An RNA binding region spans residues 179-185 (QSRESQC).

This sequence belongs to the orthohepadnavirus core antigen family. Homodimerizes, then multimerizes. Interacts with cytosol exposed regions of viral L glycoprotein present in the reticulum-to-Golgi compartment. Interacts with human FLNB. Phosphorylated form interacts with host importin alpha; this interaction depends on the exposure of the NLS, which itself depends upon genome maturation and/or phosphorylation of the capsid protein. Interacts with host NUP153. In terms of processing, phosphorylated by host SRPK1, SRPK2, and maybe protein kinase C or GAPDH. Phosphorylation is critical for pregenomic RNA packaging. Protein kinase C phosphorylation is stimulated by HBx protein and may play a role in transport of the viral genome to the nucleus at the late step during the viral replication cycle.

It is found in the virion. The protein localises to the host cytoplasm. In terms of biological role, self assembles to form an icosahedral capsid. Most capsids appear to be large particles with an icosahedral symmetry of T=4 and consist of 240 copies of capsid protein, though a fraction forms smaller T=3 particles consisting of 180 capsid proteins. Entering capsids are transported along microtubules to the nucleus. Phosphorylation of the capsid is thought to induce exposure of nuclear localization signal in the C-terminal portion of the capsid protein that allows binding to the nuclear pore complex via the importin (karyopherin-) alpha and beta. Capsids are imported in intact form through the nuclear pore into the nuclear basket, where it probably binds NUP153. Only capsids that contain the mature viral genome can release the viral DNA and capsid protein into the nucleoplasm. Immature capsids get stuck in the basket. Capsids encapsulate the pre-genomic RNA and the P protein. Pre-genomic RNA is reverse-transcribed into DNA while the capsid is still in the cytoplasm. The capsid can then either be directed to the nucleus, providing more genomes for transcription, or bud through the endoplasmic reticulum to provide new virions. This is Capsid protein from Hepatitis B virus genotype A2 subtype adw2 (strain Rutter 1979) (HBV-A).